The sequence spans 262 residues: Putative hydro-lyase Cbei_2760 (262 aa).

Belongs to the D-glutamate cyclase family.

The polypeptide is Putative hydro-lyase Cbei_2760 (Clostridium beijerinckii (strain ATCC 51743 / NCIMB 8052) (Clostridium acetobutylicum)).